The following is a 331-amino-acid chain: tRNA(Ile)-lysidine synthase (331 aa).

29 to 34 is an ATP binding site; the sequence is SGGPDS.

It belongs to the tRNA(Ile)-lysidine synthase family.

The protein resides in the cytoplasm. It catalyses the reaction cytidine(34) in tRNA(Ile2) + L-lysine + ATP = lysidine(34) in tRNA(Ile2) + AMP + diphosphate + H(+). Functionally, ligates lysine onto the cytidine present at position 34 of the AUA codon-specific tRNA(Ile) that contains the anticodon CAU, in an ATP-dependent manner. Cytidine is converted to lysidine, thus changing the amino acid specificity of the tRNA from methionine to isoleucine. This Chlorobaculum tepidum (strain ATCC 49652 / DSM 12025 / NBRC 103806 / TLS) (Chlorobium tepidum) protein is tRNA(Ile)-lysidine synthase.